The following is a 273-amino-acid chain: MDKYAVFGNPIKHSKSPFIHTLFARQTMQDLEYSAIEAPINGFVESVTAFFSQQGKGCNVTVPFKEEAFQFADQLTERAKLAGAVNTLKKLDDGIILGDNTDGEGLVQDLLQYQVPLEDKHILLIGAGGAARGVILPLLKQNPASITLVNRTYEKAKQLAELFSPYGRIEAKEMSDINKGFDVIINSTSASLSGELPQIDPVIFSGGAISYDMMYGSGKTIFNQWALENDAYQAYDGLGMLVGQAAESFTVWRGLRPGSKQILRELRKNLEGM.

Shikimate is bound by residues 14 to 16 (SKS) and threonine 61. Catalysis depends on lysine 65, which acts as the Proton acceptor. NADP(+) is bound at residue glutamate 77. Asparagine 86 and aspartate 102 together coordinate shikimate. NADP(+)-binding positions include 126–130 (GAGGA), 150–155 (NRTYEK), and methionine 213. Tyrosine 215 provides a ligand contact to shikimate. Residue glycine 237 coordinates NADP(+).

It belongs to the shikimate dehydrogenase family. As to quaternary structure, homodimer.

It catalyses the reaction shikimate + NADP(+) = 3-dehydroshikimate + NADPH + H(+). Its pathway is metabolic intermediate biosynthesis; chorismate biosynthesis; chorismate from D-erythrose 4-phosphate and phosphoenolpyruvate: step 4/7. In terms of biological role, involved in the biosynthesis of the chorismate, which leads to the biosynthesis of aromatic amino acids. Catalyzes the reversible NADPH linked reduction of 3-dehydroshikimate (DHSA) to yield shikimate (SA). The sequence is that of Shikimate dehydrogenase (NADP(+)) from Aliivibrio fischeri (strain MJ11) (Vibrio fischeri).